Consider the following 224-residue polypeptide: Putative tyrosine-protein phosphatase OCA6 (224 aa).

Position 2 is a phosphothreonine (T2). Positions 8–170 (QFSTVQPNLY…FNSEIEVDDL (163 aa)) constitute a Tyrosine-protein phosphatase domain. C114 (phosphocysteine intermediate) is an active-site residue.

It belongs to the protein-tyrosine phosphatase family.

It is found in the cytoplasm. It carries out the reaction O-phospho-L-tyrosyl-[protein] + H2O = L-tyrosyl-[protein] + phosphate. In terms of biological role, required for replication of Brome mosaic virus (BMV). The polypeptide is Putative tyrosine-protein phosphatase OCA6 (OCA6) (Saccharomyces cerevisiae (strain ATCC 204508 / S288c) (Baker's yeast)).